The primary structure comprises 254 residues: RxLR effector protein CRE5 (254 aa).

Residues 1-19 form the signal peptide; that stretch reads MQTIQLIIFVAFVLSRAAA. The N-linked (GlcNAc...) asparagine glycan is linked to asparagine 49. The short motif at 53–63 is the RxLR-dEER element; sequence RSLRQHEGEDR. The Nudix hydrolase domain maps to 191–254; it reads SRWLSAGVVT…MEEGGVCRAL (64 aa). The Nudix box motif lies at 228 to 249; it reads GGWDRGEKIKKAALREVMEEGG.

This sequence in the N-terminal section; belongs to the RxLR effector family. It in the C-terminal section; belongs to the Nudix hydrolase family.

It is found in the secreted. Its subcellular location is the host cytoplasm. The protein localises to the host nucleus. It localises to the host nucleolus. In terms of biological role, effector that is involved in host plant infection. Contributes to virulence during the early infection stage, by inhibiting plant defense responses induced by both PAMP-triggered immunity (PTI) and effector-triggered immunity (ETI). This Phytophthora infestans (strain T30-4) (Potato late blight agent) protein is RxLR effector protein CRE5.